Reading from the N-terminus, the 254-residue chain is 3-deoxy-manno-octulosonate cytidylyltransferase (254 aa).

The protein belongs to the KdsB family.

It is found in the cytoplasm. The catalysed reaction is 3-deoxy-alpha-D-manno-oct-2-ulosonate + CTP = CMP-3-deoxy-beta-D-manno-octulosonate + diphosphate. The protein operates within nucleotide-sugar biosynthesis; CMP-3-deoxy-D-manno-octulosonate biosynthesis; CMP-3-deoxy-D-manno-octulosonate from 3-deoxy-D-manno-octulosonate and CTP: step 1/1. It participates in bacterial outer membrane biogenesis; lipopolysaccharide biosynthesis. Its function is as follows. Activates KDO (a required 8-carbon sugar) for incorporation into bacterial lipopolysaccharide in Gram-negative bacteria. The sequence is that of 3-deoxy-manno-octulosonate cytidylyltransferase from Geobacter metallireducens (strain ATCC 53774 / DSM 7210 / GS-15).